Consider the following 1755-residue polypeptide: Transposon Ty1-LR3 Gag-Pol polyprotein (1755 aa).

Over residues 1–16 (MESQQLSQHSHISHGS) the composition is skewed to low complexity. Disordered regions lie at residues 1–93 (MESQ…MMTQ), 126–173 (PQSQ…RPPP), and 352–421 (GSRN…SKST). Composition is skewed to polar residues over residues 48–60 (TKAN…TPAS) and 127–152 (QSQF…GNTF). Residues 153-165 (TDSSSADSDMTST) are compositionally biased toward low complexity. Positions 299–401 (NNGIHINNKV…NSKSKTARAH (103 aa)) are RNA-binding. The span at 402-418 (NVSTSNNSPSTDNDSIS) shows a compositional bias: low complexity. Ser416 carries the post-translational modification Phosphoserine. The active-site For protease activity; shared with dimeric partner is the Asp461. An integrase-type zinc finger-like region spans residues 583-640 (NVHTSESTRKYPYPFIHRMLAHANAQTIRYSLKNNTITYFNESDVDWSSAIDYQCPDC). Positions 660–829 (NSYEPFQYLH…SQHAGLAGLD (170 aa)) constitute an Integrase catalytic domain. Mg(2+) is bound by residues Asp671 and Asp736. Disordered stretches follow at residues 956–1087 (SKAV…ETEK), 1092–1111 (RSPS…NIVP), and 1129–1172 (ADLP…SNAY). Residues 960 to 969 (SPTDSTPPST) are compositionally biased toward low complexity. Polar residues predominate over residues 1005–1015 (STPQISNIEST). Positions 1038-1052 (ESSHASKSKDFRHSD) are enriched in basic and acidic residues. Composition is skewed to polar residues over residues 1053–1082 (SYSN…QISD) and 1101–1111 (PENNSSHNIVP). A Bipartite nuclear localization signal motif is present at residues 1178–1212 (KKRSLEDNETEIKVSRDTWNTKNMRSLEPPRSKKR). A Reverse transcriptase Ty1/copia-type domain is found at 1338-1476 (NNYYITQLDI…DILGLEIKYQ (139 aa)). Positions 1346, 1427, 1428, 1610, 1652, and 1685 each coordinate Mg(2+). The RNase H Ty1/copia-type domain occupies 1610–1752 (DASYGNQPYY…IKTFKLLTNK (143 aa)).

In terms of assembly, the capsid protein forms a homotrimer, from which the VLPs are assembled. The protease is a homodimer, whose active site consists of two apposed aspartic acid residues. Post-translationally, initially, virus-like particles (VLPs) are composed of the structural unprocessed proteins Gag and Gag-Pol, and also contain the host initiator methionine tRNA (tRNA(i)-Met) which serves as a primer for minus-strand DNA synthesis, and a dimer of genomic Ty RNA. Processing of the polyproteins occurs within the particle and proceeds by an ordered pathway, called maturation. First, the protease (PR) is released by autocatalytic cleavage of the Gag-Pol polyprotein yielding capsid protein p45 and a Pol-p154 precursor protein. This cleavage is a prerequisite for subsequent processing of Pol-p154 at the remaining sites to release the mature structural and catalytic proteins. Maturation takes place prior to the RT reaction and is required to produce transposition-competent VLPs.

It localises to the cytoplasm. The protein localises to the nucleus. The catalysed reaction is DNA(n) + a 2'-deoxyribonucleoside 5'-triphosphate = DNA(n+1) + diphosphate. It catalyses the reaction Endonucleolytic cleavage to 5'-phosphomonoester.. Its function is as follows. Capsid protein (CA) is the structural component of the virus-like particle (VLP), forming the shell that encapsulates the retrotransposons dimeric RNA genome. The particles are assembled from trimer-clustered units and there are holes in the capsid shells that allow for the diffusion of macromolecules. CA also has nucleocapsid-like chaperone activity, promoting primer tRNA(i)-Met annealing to the multipartite primer-binding site (PBS), dimerization of Ty1 RNA and initiation of reverse transcription. The aspartyl protease (PR) mediates the proteolytic cleavages of the Gag and Gag-Pol polyproteins after assembly of the VLP. Functionally, reverse transcriptase/ribonuclease H (RT) is a multifunctional enzyme that catalyzes the conversion of the retro-elements RNA genome into dsDNA within the VLP. The enzyme displays a DNA polymerase activity that can copy either DNA or RNA templates, and a ribonuclease H (RNase H) activity that cleaves the RNA strand of RNA-DNA heteroduplexes during plus-strand synthesis and hydrolyzes RNA primers. The conversion leads to a linear dsDNA copy of the retrotransposon that includes long terminal repeats (LTRs) at both ends. In terms of biological role, integrase (IN) targets the VLP to the nucleus, where a subparticle preintegration complex (PIC) containing at least integrase and the newly synthesized dsDNA copy of the retrotransposon must transit the nuclear membrane. Once in the nucleus, integrase performs the integration of the dsDNA into the host genome. This chain is Transposon Ty1-LR3 Gag-Pol polyprotein (TY1B-LR3), found in Saccharomyces cerevisiae (strain ATCC 204508 / S288c) (Baker's yeast).